The following is a 419-amino-acid chain: Epothilone C/D epoxidase (419 aa).

Substrate-binding residues include alanine 180 and glycine 304. Cysteine 365 is a binding site for heme.

This sequence belongs to the cytochrome P450 family. Requires heme as cofactor.

It catalyses the reaction epothilone C + 2 reduced [2Fe-2S]-[ferredoxin] + O2 + 2 H(+) = epothilone A + 2 oxidized [2Fe-2S]-[ferredoxin] + H2O. The catalysed reaction is epothilone D + 2 reduced [2Fe-2S]-[ferredoxin] + O2 + 2 H(+) = epothilone B + 2 oxidized [2Fe-2S]-[ferredoxin] + H2O. Its pathway is secondary metabolite biosynthesis; epothilone biosynthesis. In terms of biological role, involved in the biosynthesis of epothilones, macrolactones which have a narrow anti-fungal spectrum and microtubule-stabilizing activity. Catalyzes the epoxidation of epothilones C and D to epothilones A and B, respectively. The protein is Epothilone C/D epoxidase (cyp167A1) of Sorangium cellulosum (Polyangium cellulosum).